The primary structure comprises 606 residues: Probable potassium transport system protein Kup (606 aa).

12 helical membrane passes run 18–38, 46–66, 97–117, 138–158, 166–186, 212–232, 247–267, 287–307, 339–359, 368–388, 395–415, and 418–438; these read GLVFGDIGTSPIYTLTVVFAL, VFGILSLVFWTMTILVTAEYA, LTFVVFLTYLGVSLLMGDGVI, GLHQSWLILIAAIIAVGLFVF, VAGAFGPIMVVWFASLALSGA, GLAGFIVLSEVILCATGGEAL, AWYIVFWALYLNYLGQGAFII, LYIPFLILTILATIIASQAMI, IYIGSVNWMLMIAVVVIMLVF, AYGLAVTGSMSITGIMMILIL, WKAVFAALITVVDLVFFTACL, and LPHGGYWSIILASVPFITILV.

It belongs to the HAK/KUP transporter (TC 2.A.72) family.

The protein localises to the cell inner membrane. The enzyme catalyses K(+)(in) + H(+)(in) = K(+)(out) + H(+)(out). Functionally, transport of potassium into the cell. Likely operates as a K(+):H(+) symporter. In Trichlorobacter lovleyi (strain ATCC BAA-1151 / DSM 17278 / SZ) (Geobacter lovleyi), this protein is Probable potassium transport system protein Kup.